The chain runs to 210 residues: SAP domain-containing ribonucleoprotein (210 aa).

Residue Ala2 is modified to N-acetylalanine. One can recognise an SAP domain in the interval Leu8 to Leu42. Lys10 carries the N6-acetyllysine modification. The segment covering His45–Glu64 has biased composition (acidic residues). The segment at His45–Glu87 is disordered. Basic and acidic residues predominate over residues Pro65–Glu87. The residue at position 142 (Lys142) is an N6-acetyllysine. The interval Ser162–Ala210 is disordered. Residue Ser163 is modified to Phosphoserine. Residues Val184 to Thr193 are compositionally biased toward polar residues.

It belongs to the SAP domain-containing ribonucleoprotein family. In terms of assembly, interacts with DDX39A. Interacts with FUS. Interacts (via the C-terminal domain) with DDX39B; the interaction is direct and facilitates RNA binding of DDX39B. Component of the transcription/export (TREX) complex at least composed of ALYREF/THOC4, DDX39B, SARNP/CIP29, CHTOP and the THO subcomplex; TREX seems to have dynamic structure involving ATP-dependent remodeling; in the complex interacts directly with DDX39B in a ATP-dependent manner which bridges it to ALYREF/THOC4.

The protein resides in the nucleus. It localises to the nucleus speckle. In terms of biological role, binds both single-stranded and double-stranded DNA with higher affinity for the single-stranded form. Specifically binds to scaffold/matrix attachment region DNA. Also binds single-stranded RNA. Enhances RNA unwinding activity of DDX39A. May participate in important transcriptional or translational control of cell growth, metabolism and carcinogenesis. Component of the TREX complex which is thought to couple mRNA transcription, processing and nuclear export, and specifically associates with spliced mRNA and not with unspliced pre-mRNA. The TREX complex is recruited to spliced mRNAs by a transcription-independent mechanism, binds to mRNA upstream of the exon-junction complex (EJC) and is recruited in a splicing- and cap-dependent manner to a region near the 5' end of the mRNA where it functions in mRNA export to the cytoplasm via the TAP/NXF1 pathway. Associates with DDX39B, which facilitates RNA binding of DDX39B and likely plays a role in mRNA export. The protein is SAP domain-containing ribonucleoprotein (Sarnp) of Mus musculus (Mouse).